We begin with the raw amino-acid sequence, 447 residues long: Argininosuccinate synthase (447 aa).

Residues 17–25 (AFSGGLDTS) and Ala43 each bind ATP. Residue Tyr99 participates in L-citrulline binding. The ATP site is built by Gly129 and Thr131. 3 residues coordinate L-aspartate: Thr131, Asn135, and Asp136. Asn135 provides a ligand contact to L-citrulline. Asp136 contributes to the ATP binding site. L-citrulline contacts are provided by Arg139 and Ser192. Asp194 is an ATP binding site. L-citrulline contacts are provided by Thr201, Glu203, and Glu280.

This sequence belongs to the argininosuccinate synthase family. Type 2 subfamily. Homotetramer.

The protein localises to the cytoplasm. It catalyses the reaction L-citrulline + L-aspartate + ATP = 2-(N(omega)-L-arginino)succinate + AMP + diphosphate + H(+). It functions in the pathway amino-acid biosynthesis; L-arginine biosynthesis; L-arginine from L-ornithine and carbamoyl phosphate: step 2/3. The polypeptide is Argininosuccinate synthase (Salmonella dublin (strain CT_02021853)).